A 247-amino-acid polypeptide reads, in one-letter code: tRNA pseudouridine synthase A (247 aa).

Residue aspartate 52 is the Nucleophile of the active site. Residue tyrosine 113 coordinates substrate.

Belongs to the tRNA pseudouridine synthase TruA family. In terms of assembly, homodimer.

The catalysed reaction is uridine(38/39/40) in tRNA = pseudouridine(38/39/40) in tRNA. Functionally, formation of pseudouridine at positions 38, 39 and 40 in the anticodon stem and loop of transfer RNAs. The sequence is that of tRNA pseudouridine synthase A from Sinorhizobium fredii (strain NBRC 101917 / NGR234).